A 238-amino-acid chain; its full sequence is Uridylate kinase (238 aa).

12–15 (KLSG) is a binding site for ATP. Position 54 (Gly-54) interacts with UMP. Residues Gly-55 and Arg-59 each contribute to the ATP site. Residues Asp-74 and 135-142 (TGNPYFTT) contribute to the UMP site. ATP is bound by residues Thr-162, Tyr-168, and Asp-171.

This sequence belongs to the UMP kinase family. Homohexamer.

It localises to the cytoplasm. It catalyses the reaction UMP + ATP = UDP + ADP. The protein operates within pyrimidine metabolism; CTP biosynthesis via de novo pathway; UDP from UMP (UMPK route): step 1/1. With respect to regulation, inhibited by UTP. Functionally, catalyzes the reversible phosphorylation of UMP to UDP. The polypeptide is Uridylate kinase (Nitratidesulfovibrio vulgaris (strain ATCC 29579 / DSM 644 / CCUG 34227 / NCIMB 8303 / VKM B-1760 / Hildenborough) (Desulfovibrio vulgaris)).